The primary structure comprises 475 residues: Pentatricopeptide repeat-containing protein At1g29710, mitochondrial (475 aa).

Residues 1 to 37 (MVRLWCGKLRLWKPYLALATQSRNSWFCSGGGAPSHH) constitute a mitochondrion transit peptide. PPR repeat units follow at residues 83–117 (AQNV…GYAM), 118–148 (DLIR…IIAL), 153–183 (DVGA…MPEW), 184–218 (NSGT…GNKP), 219–254 (NGEI…GIVP), and 255–285 (SMEH…MPME). The segment at 350-380 (YFYSTFRPVDSSHPQMNIIYETLMSLRSQLK) is type E(+) motif. Residues 381–475 (EMGYVPDTRY…NGVCRCNNLW (95 aa)) are type DYW motif.

Belongs to the PPR family. PCMP-H subfamily.

Its subcellular location is the mitochondrion. The protein is Pentatricopeptide repeat-containing protein At1g29710, mitochondrial (PCMP-H67) of Arabidopsis thaliana (Mouse-ear cress).